A 423-amino-acid polypeptide reads, in one-letter code: MQQEGGPVRSAPCRTGTLEGSRQGSPGHRKRASPKGSLSSAQPHSWMLTPSPLNSHCAHREPISSSPQPVANGPKQKKKSNWRSTTRLRIIRLRDRLEPRPLAILEDYADPFDVQETGEGSAGASGAPEKVPENDGYMEPYEAQKMMAEIRGSKETATQPLPLYDTPYEPEEDGATAEGEGAPWPRESRLPEDDERPPEEYDQPWEWKKERISKAFAVDIKVIKDLPWPPPVGQLDSSPSLPDGDRDISGPASPLPEPSLEDSSAQFEGPEKSCLSPGREEKGRLPPRLSAGNPKSAKPLSMEPSSPLGEWTDPALPLENQVWYHGAISRTDAENLLRLCKEASYLVRNSETSKNDFSLSLKSSQGFMHMKLSRTKEHKYVLGQNSPPFSSVPEIVHHYASRKLPIKGAEHMSLLYPVAIRTL.

Disordered regions lie at residues 1-87 (MQQE…STTR), 110-208 (DPFD…WEWK), and 225-312 (DLPW…GEWT). Positions 192 to 203 (EDDERPPEEYDQ) are enriched in acidic residues. At Y201 the chain carries Phosphotyrosine. One can recognise an SH2 domain in the interval 323–418 (WYHGAISRTD…AEHMSLLYPV (96 aa)).

Interacts with phosphorylated 'Tyr-720' of PDGFRA via its SH2 domain. In terms of processing, may become phosphorylated upon binding to PDGFRA. Expressed in skeletal muscle, brain, liver, prostate, testis, ovary, small intestine and colon.

Adapter protein which may play a role in the regulation of apoptosis in response to PDGF. This is SH2 domain-containing adapter protein F from Homo sapiens (Human).